The primary structure comprises 257 residues: Small ribosomal subunit protein uS2 (257 aa).

Residues 237–257 (MDEADGSEAEPEDPAAPESAE) are disordered. Acidic residues predominate over residues 240-257 (ADGSEAEPEDPAAPESAE).

Belongs to the universal ribosomal protein uS2 family.

The chain is Small ribosomal subunit protein uS2 from Chlorobium phaeovibrioides (strain DSM 265 / 1930) (Prosthecochloris vibrioformis (strain DSM 265)).